The sequence spans 230 residues: RING finger protein 141 (230 aa).

The N-myristoyl glycine moiety is linked to residue glycine 2. The segment at 155-192 adopts an RING-type zinc-finger fold; it reads CCICMDGRADLILPCAHSFCQKCIDKWSDRHRNCPICR.

In terms of tissue distribution, isoform 1 is testis-specific. Isoform 2 is expressed in heart, brain, skeletal muscle, kidney, pancreas, lung, liver and testis. Isoform 3 is expressed in heart, liver, and kidney.

It is found in the membrane. In terms of biological role, may be involved in spermatogenesis. The chain is RING finger protein 141 (Rnf141) from Mus musculus (Mouse).